Here is a 620-residue protein sequence, read N- to C-terminus: Chaperone protein HscA homolog (620 aa).

This sequence belongs to the heat shock protein 70 family.

In terms of biological role, chaperone involved in the maturation of iron-sulfur cluster-containing proteins. Has a low intrinsic ATPase activity which is markedly stimulated by HscB. This is Chaperone protein HscA homolog from Acinetobacter baylyi (strain ATCC 33305 / BD413 / ADP1).